We begin with the raw amino-acid sequence, 573 residues long: Poly(ribitol-phosphate) beta-N-acetylglucosaminyltransferase TarS (573 aa).

UDP-N-acetyl-alpha-D-glucosamine contacts are provided by residues proline 9, aspartate 41, asparagine 68, arginine 76, aspartate 92–aspartate 94, arginine 127, and glutamate 178. Mn(2+) is bound at residue aspartate 94. Residue aspartate 179 is the Proton acceptor of the active site. UDP-N-acetyl-alpha-D-glucosamine-binding positions include arginine 207 and histidine 211–serine 213.

Belongs to the glycosyltransferase 2 family. In terms of assembly, homotrimer. The cofactor is Mn(2+).

The catalysed reaction is 4-O-[(D-ribitylphospho)(n)-di{(2R)-glycerylphospho}]-N-acetyl-beta-D-mannosaminyl-(1-&gt;4)-N-acetyl-alpha-D-glucosaminyl di-trans,octa-cis-undecaprenyl diphosphate + n UDP-N-acetyl-alpha-D-glucosamine = 4-O-([2-N-acetyl-beta-D-glucosaminyl-1-D-ribitylphospho](n)-di{[2R]-1-glycerylphospho})-N-acetyl-beta-D-mannosaminyl-(1-&gt;4)-N-acetyl-alpha-D-glucosaminyl di-trans,octa-cis-undecaprenyl diphosphate + n UDP + n H(+). It participates in cell wall biogenesis; poly(ribitol phosphate) teichoic acid biosynthesis. In terms of biological role, attaches beta-O-GlcNAc (beta-O-N-acetyl-D-glucosamine) residues to the C4 position of poly(RboP)-wall teichoic acids (WTAs). Mediates beta-lactam resistance in methicillin resistant Staphylococcus aureus (MRSA) strains. In Staphylococcus aureus (strain Mu50 / ATCC 700699), this protein is Poly(ribitol-phosphate) beta-N-acetylglucosaminyltransferase TarS.